The chain runs to 394 residues: NAD(P)H-quinone oxidoreductase subunit H (394 aa).

It belongs to the complex I 49 kDa subunit family. NDH-1 can be composed of about 15 different subunits; different subcomplexes with different compositions have been identified which probably have different functions.

The protein resides in the cellular thylakoid membrane. It catalyses the reaction a plastoquinone + NADH + (n+1) H(+)(in) = a plastoquinol + NAD(+) + n H(+)(out). It carries out the reaction a plastoquinone + NADPH + (n+1) H(+)(in) = a plastoquinol + NADP(+) + n H(+)(out). In terms of biological role, NDH-1 shuttles electrons from an unknown electron donor, via FMN and iron-sulfur (Fe-S) centers, to quinones in the respiratory and/or the photosynthetic chain. The immediate electron acceptor for the enzyme in this species is believed to be plastoquinone. Couples the redox reaction to proton translocation, and thus conserves the redox energy in a proton gradient. Cyanobacterial NDH-1 also plays a role in inorganic carbon-concentration. In Prochlorococcus marinus (strain SARG / CCMP1375 / SS120), this protein is NAD(P)H-quinone oxidoreductase subunit H.